A 332-amino-acid chain; its full sequence is Super small secreted glycoprotein (332 aa).

An N-terminal signal peptide occupies residues 1–33; the sequence is MGSGYQLLQLPRERFRKTSFLVWVIILFQRAIS. The N-linked (GlcNAc...) asparagine; by host glycan is linked to Asn-41. 2 disulfide bridges follow: Cys-109-Cys-136 and Cys-122-Cys-148. N-linked (GlcNAc...) asparagine; by host glycans are attached at residues Asn-205, Asn-239, Asn-258, and Asn-269.

This sequence belongs to the filoviruses glycoprotein family.

It localises to the secreted. The protein is Super small secreted glycoprotein (GP) of Homo sapiens (Human).